The sequence spans 338 residues: Taste receptor type 2 member 39 (338 aa).

Residues 1–30 (MLGRCFPPDTKEKQQLRMTKLCDPAESELS) are Extracellular-facing. The chain crosses the membrane as a helical span at residues 31–51 (PFLITLILAVLLAEYLIGIIA). At 52 to 74 (NGFIMAIHAAEWVQNKAVSTSGR) the chain is on the cytoplasmic side. A helical membrane pass occupies residues 75–95 (ILVFLSVSRIALQSLMMLEIT). Topologically, residues 96 to 116 (ISSTSLSFYSEDAVYYAFKIS) are extracellular. The helical transmembrane segment at 117-137 (FIFLNFCSLWFAAWLSFFYFV) threads the bilayer. Residues 138-156 (KIANFSYPLFLKLRWRITG) are Cytoplasmic-facing. A helical transmembrane segment spans residues 157-177 (LIPWLLWLSVFISFSHSMFCI). Over 178–205 (NIXTVYCNNSFPIHSSNSTKKTYLSEIN) the chain is Extracellular. 2 N-linked (GlcNAc...) asparagine glycosylation sites follow: N185 and N194. A helical transmembrane segment spans residues 206–226 (VVGLAFFFNLGIVTPLIMFIL). Residues 227–262 (TATLLILSLKRHTLHMGSNATGSNDPSMEAHMGAIK) lie on the Cytoplasmic side of the membrane. The chain crosses the membrane as a helical span at residues 263 to 283 (ATSYFLILYIFNAVALFIYLS). The Extracellular segment spans residues 284–291 (NMFDINSL). Residues 292-312 (WNNLCQIIMAAYPASHSILLI) traverse the membrane as a helical segment. At 313 to 338 (QDNPGLRRAWKRLQLRLHLYPKEWTL) the chain is on the cytoplasmic side.

It belongs to the G-protein coupled receptor T2R family.

Its subcellular location is the membrane. In terms of biological role, receptor that may play a role in the perception of bitterness and is gustducin-linked. May play a role in sensing the chemical composition of the gastrointestinal content. The activity of this receptor may stimulate alpha gustducin, mediate PLC-beta-2 activation and lead to the gating of TRPM5. The polypeptide is Taste receptor type 2 member 39 (TAS2R39) (Gorilla gorilla gorilla (Western lowland gorilla)).